The primary structure comprises 319 residues: tRNA (guanine-N(7)-)-methyltransferase (319 aa).

Residues 1 to 44 (MSESPETPEPSPAQSPEAAPEQPQAARPVTPGSQASFGTYGGRP) are disordered. Low complexity predominate over residues 14–26 (QSPEAAPEQPQAA). The S-adenosyl-L-methionine site is built by Glu103, Glu128, Asn155, and Asp178. Residue Asp178 is part of the active site. The substrate site is built by Lys182 and Asp214. The disordered stretch occupies residues 262–288 (APVKEGRAPVSTEHTGPNEGVDETGGW). 298–301 (TSFE) serves as a coordination point for substrate.

It belongs to the class I-like SAM-binding methyltransferase superfamily. TrmB family.

It carries out the reaction guanosine(46) in tRNA + S-adenosyl-L-methionine = N(7)-methylguanosine(46) in tRNA + S-adenosyl-L-homocysteine. Its pathway is tRNA modification; N(7)-methylguanine-tRNA biosynthesis. Its function is as follows. Catalyzes the formation of N(7)-methylguanine at position 46 (m7G46) in tRNA. The protein is tRNA (guanine-N(7)-)-methyltransferase of Arthrobacter sp. (strain FB24).